Here is a 70-residue protein sequence, read N- to C-terminus: Protein SlyX homolog (70 aa).

Belongs to the SlyX family.

The sequence is that of Protein SlyX homolog from Shewanella pealeana (strain ATCC 700345 / ANG-SQ1).